The primary structure comprises 388 residues: Galactokinase (388 aa).

A substrate-binding site is contributed by 33–36 (EHTD). ATP contacts are provided by residues S67 and 125-131 (GSGLSSS). Residues S131 and E163 each contribute to the Mg(2+) site. The Proton acceptor role is filled by D175. Y225 lines the substrate pocket.

This sequence belongs to the GHMP kinase family. GalK subfamily.

The protein resides in the cytoplasm. It catalyses the reaction alpha-D-galactose + ATP = alpha-D-galactose 1-phosphate + ADP + H(+). The protein operates within carbohydrate metabolism; galactose metabolism. Catalyzes the transfer of the gamma-phosphate of ATP to D-galactose to form alpha-D-galactose-1-phosphate (Gal-1-P). The chain is Galactokinase from Lactobacillus helveticus (Lactobacillus suntoryeus).